A 63-amino-acid chain; its full sequence is MADKKLKVTLKRGLIGVSDGKIRTIKALGLKKRSHSVIKNDTPEIRGMIDKVSNLVEVEELEA.

It belongs to the universal ribosomal protein uL30 family. Part of the 50S ribosomal subunit.

The chain is Large ribosomal subunit protein uL30 from Natranaerobius thermophilus (strain ATCC BAA-1301 / DSM 18059 / JW/NM-WN-LF).